The chain runs to 164 residues: Phosphopantetheine adenylyltransferase (164 aa).

Ser10 contributes to the substrate binding site. Residues 10-11 (SF) and His18 each bind ATP. Substrate is bound by residues Lys42, Leu74, and Arg88. Residues 89–91 (GLR), Glu99, and 124–130 (YSFLSSS) contribute to the ATP site.

Belongs to the bacterial CoaD family. Homohexamer. Requires Mg(2+) as cofactor.

It is found in the cytoplasm. It carries out the reaction (R)-4'-phosphopantetheine + ATP + H(+) = 3'-dephospho-CoA + diphosphate. The protein operates within cofactor biosynthesis; coenzyme A biosynthesis; CoA from (R)-pantothenate: step 4/5. Reversibly transfers an adenylyl group from ATP to 4'-phosphopantetheine, yielding dephospho-CoA (dPCoA) and pyrophosphate. In Exiguobacterium sibiricum (strain DSM 17290 / CCUG 55495 / CIP 109462 / JCM 13490 / 255-15), this protein is Phosphopantetheine adenylyltransferase.